Here is a 363-residue protein sequence, read N- to C-terminus: S-adenosylmethionine:tRNA ribosyltransferase-isomerase (363 aa).

The protein belongs to the QueA family. As to quaternary structure, monomer.

It localises to the cytoplasm. The enzyme catalyses 7-aminomethyl-7-carbaguanosine(34) in tRNA + S-adenosyl-L-methionine = epoxyqueuosine(34) in tRNA + adenine + L-methionine + 2 H(+). The protein operates within tRNA modification; tRNA-queuosine biosynthesis. Transfers and isomerizes the ribose moiety from AdoMet to the 7-aminomethyl group of 7-deazaguanine (preQ1-tRNA) to give epoxyqueuosine (oQ-tRNA). The chain is S-adenosylmethionine:tRNA ribosyltransferase-isomerase from Brucella melitensis biotype 2 (strain ATCC 23457).